A 402-amino-acid chain; its full sequence is Baeyer-Villiger oxidase notM (402 aa).

It belongs to the questin oxidase family.

Functionally, baeyer-Villiger oxidase; part of the gene cluster that mediates the biosynthesis of notoamide, a fungal indole alkaloid that belongs to a family of natural products containing a characteristic bicyclo[2.2.2]diazaoctane core. The first step of notoamide biosynthesis involves coupling of L-proline and L-tryptophan by the bimodular NRPS notE, to produce cyclo-L-tryptophan-L-proline called brevianamide F. The reverse prenyltransferase notF then acts as a deoxybrevianamide E synthase and converts brevianamide F to deoxybrevianamide E via reverse prenylation at C-2 of the indole ring leading to the bicyclo[2.2.2]diazaoctane core. Deoxybrevianamide E is further hydroxylated at C-6 of the indole ring, likely catalyzed by the cytochrome P450 monooxygenase notG, to yield 6-hydroxy-deoxybrevianamide E. 6-hydroxy-deoxybrevianamide E is a specific substrate of the prenyltransferase notC for normal prenylation at C-7 to produce 6-hydroxy-7-prenyl-deoxybrevianamide, also called notoamide S. As the proposed pivotal branching point in notoamide biosynthesis, notoamide S can be diverted to notoamide E through an oxidative pyran ring closure putatively catalyzed by either notH cytochrome P450 monooxygenase or the notD FAD-linked oxidoreductase. This step would be followed by an indole 2,3-epoxidation-initiated pinacol-like rearrangement catalyzed by the notB FAD-dependent monooxygenase leading to the formation of notoamide C and notoamide D. On the other hand notoamide S is converted to notoamide T by notH (or notD), a bifunctional oxidase that also functions as the intramolecular Diels-Alderase responsible for generation of (+)-notoamide T. To generate antipodal (-)-notoaminide T, notH' (or notD') in Aspergillus versicolor is expected to catalyze a Diels-Alder reaction leading to the opposite stereochemistry. The remaining oxidoreductase notD (or notH) likely catalyzes the oxidative pyran ring formation to yield (+)-stephacidin A. The FAD-dependent monooxygenase notI is highly similar to notB and is predicted to catalyze a similar conversion from (+)-stephacidin A to (-)-notoamide B via the 2,3-epoxidation of (+)-stephacidin A followed by a pinacol-type rearrangement. Finally, it remains unclear which enzyme could be responsible for the final hydroxylation steps leading to notoamide A and sclerotiamide. The function of notM in the notoamide biosynthesis has not been determined yet. The protein is Baeyer-Villiger oxidase notM of Aspergillus sp. (strain MF297-2).